Consider the following 199-residue polypeptide: Recombination protein RecR (199 aa).

A C4-type zinc finger spans residues 56–71; it reads CATCGNVAQEEQCNIC. One can recognise a Toprim domain in the interval 79 to 174; that stretch reads SVICVVEEPK…KVTRLASGLP (96 aa).

This sequence belongs to the RecR family.

Its function is as follows. May play a role in DNA repair. It seems to be involved in an RecBC-independent recombinational process of DNA repair. It may act with RecF and RecO. The protein is Recombination protein RecR of Streptomyces coelicolor (strain ATCC BAA-471 / A3(2) / M145).